We begin with the raw amino-acid sequence, 139 residues long: MHRSTLPKYARVLKRKQFLYISRAGSHCQGSQVIFHVAPSRYSGCCKLGITVSKKFGKAHKRNYFKRIVREAFRKKRHSLPACQIVVMPKNKQQPKFEDLLQDFAQQIPEALSSKLAKNKPTTGVEYSPKNEKCESVLP.

The segment at 120 to 139 is disordered; it reads KPTTGVEYSPKNEKCESVLP. The span at 129–139 shows a compositional bias: basic and acidic residues; that stretch reads PKNEKCESVLP.

The protein belongs to the RnpA family. As to quaternary structure, consists of a catalytic RNA component (M1 or rnpB) and a protein subunit.

It catalyses the reaction Endonucleolytic cleavage of RNA, removing 5'-extranucleotides from tRNA precursor.. RNaseP catalyzes the removal of the 5'-leader sequence from pre-tRNA to produce the mature 5'-terminus. It can also cleave other RNA substrates such as 4.5S RNA. The protein component plays an auxiliary but essential role in vivo by binding to the 5'-leader sequence and broadening the substrate specificity of the ribozyme. The sequence is that of Ribonuclease P protein component from Chlamydia caviae (strain ATCC VR-813 / DSM 19441 / 03DC25 / GPIC) (Chlamydophila caviae).